We begin with the raw amino-acid sequence, 107 residues long: UPF0145 protein BT_3410 (107 aa).

This sequence belongs to the UPF0145 family.

The polypeptide is UPF0145 protein BT_3410 (Bacteroides thetaiotaomicron (strain ATCC 29148 / DSM 2079 / JCM 5827 / CCUG 10774 / NCTC 10582 / VPI-5482 / E50)).